Reading from the N-terminus, the 45-residue chain is MLPTYRPNKRRRAKSIGFRARMETPGGKKVLSARRAKGRKNLIAK.

A disordered region spans residues 23–45; it reads ETPGGKKVLSARRAKGRKNLIAK. A compositionally biased stretch (basic residues) spans 31-45; it reads LSARRAKGRKNLIAK.

It belongs to the bacterial ribosomal protein bL34 family.

This is Large ribosomal subunit protein bL34 from Elusimicrobium minutum (strain Pei191).